Reading from the N-terminus, the 92-residue chain is Small ribosomal subunit protein uS19 (92 aa).

This sequence belongs to the universal ribosomal protein uS19 family.

In terms of biological role, protein S19 forms a complex with S13 that binds strongly to the 16S ribosomal RNA. The sequence is that of Small ribosomal subunit protein uS19 from Bacillus cytotoxicus (strain DSM 22905 / CIP 110041 / 391-98 / NVH 391-98).